The primary structure comprises 99 residues: YcgL domain-containing protein HD_1373 (99 aa).

Positions Asn-8–Leu-92 constitute a YcgL domain.

The sequence is that of YcgL domain-containing protein HD_1373 from Haemophilus ducreyi (strain 35000HP / ATCC 700724).